The primary structure comprises 276 residues: Exosome complex component Rrp42 (276 aa).

It belongs to the RNase PH family. Rrp42 subfamily. As to quaternary structure, component of the archaeal exosome complex. Forms a hexameric ring-like arrangement composed of 3 Rrp41-Rrp42 heterodimers. The hexameric ring associates with a trimer of Rrp4 and/or Csl4 subunits.

The protein resides in the cytoplasm. Functionally, non-catalytic component of the exosome, which is a complex involved in RNA degradation. Contributes to the structuring of the Rrp41 active site. The protein is Exosome complex component Rrp42 of Aeropyrum pernix (strain ATCC 700893 / DSM 11879 / JCM 9820 / NBRC 100138 / K1).